The chain runs to 173 residues: Pectinesterase inhibitor 2 (173 aa).

Positions 1-25 are cleaved as a signal peptide; the sequence is MAAYLTNRVLMSSLMFFVMTGSLNA. Residues cysteine 34 and cysteine 43 are joined by a disulfide bond. N-linked (GlcNAc...) asparagine glycosylation is found at asparagine 39 and asparagine 63. A disulfide bridge links cysteine 99 with cysteine 139.

It belongs to the PMEI family. Interacts with PPME1. In terms of tissue distribution, highest expression in flowers. Expressed exclusively at the pollen tube tip.

The protein localises to the secreted. It localises to the extracellular space. Its subcellular location is the apoplast. Functionally, inhibits pectin methylesterase (PME) from flowers, siliques and pollen tube. The sequence is that of Pectinesterase inhibitor 2 from Arabidopsis thaliana (Mouse-ear cress).